A 65-amino-acid polypeptide reads, in one-letter code: Photosystem II reaction center protein H (65 aa).

The chain crosses the membrane as a helical span at residues 27–47; the sequence is GAVPVMAFIGVLLLVFLVIML.

This sequence belongs to the PsbH family. In terms of assembly, PSII is composed of 1 copy each of membrane proteins PsbA, PsbB, PsbC, PsbD, PsbE, PsbF, PsbH, PsbI, PsbJ, PsbK, PsbL, PsbM, PsbT, PsbX, PsbY, Psb30/Ycf12, peripheral proteins PsbO, CyanoQ (PsbQ), PsbU, PsbV and a large number of cofactors. It forms dimeric complexes.

The protein localises to the cellular thylakoid membrane. In terms of biological role, one of the components of the core complex of photosystem II (PSII), required for its stability and/or assembly. PSII is a light-driven water:plastoquinone oxidoreductase that uses light energy to abstract electrons from H(2)O, generating O(2) and a proton gradient subsequently used for ATP formation. It consists of a core antenna complex that captures photons, and an electron transfer chain that converts photonic excitation into a charge separation. The protein is Photosystem II reaction center protein H of Prochlorococcus marinus (strain NATL1A).